Reading from the N-terminus, the 203-residue chain is Holliday junction branch migration complex subunit RuvA (203 aa).

A domain I region spans residues 1-64 (MIGRLRGIII…EDAQLLYGFN (64 aa)). Residues 65–142 (NKQERTLFKE…KGLHGDLFTP (78 aa)) form a domain II region. The segment at 143–154 (AADLVLTSPASP) is flexible linker. The segment at 155-203 (ATDDAEQEAVAALVALGYKPQEASRMVSKIARPDASSETLIREALRAAL) is domain III.

This sequence belongs to the RuvA family. As to quaternary structure, homotetramer. Forms an RuvA(8)-RuvB(12)-Holliday junction (HJ) complex. HJ DNA is sandwiched between 2 RuvA tetramers; dsDNA enters through RuvA and exits via RuvB. An RuvB hexamer assembles on each DNA strand where it exits the tetramer. Each RuvB hexamer is contacted by two RuvA subunits (via domain III) on 2 adjacent RuvB subunits; this complex drives branch migration. In the full resolvosome a probable DNA-RuvA(4)-RuvB(12)-RuvC(2) complex forms which resolves the HJ.

The protein resides in the cytoplasm. Functionally, the RuvA-RuvB-RuvC complex processes Holliday junction (HJ) DNA during genetic recombination and DNA repair, while the RuvA-RuvB complex plays an important role in the rescue of blocked DNA replication forks via replication fork reversal (RFR). RuvA specifically binds to HJ cruciform DNA, conferring on it an open structure. The RuvB hexamer acts as an ATP-dependent pump, pulling dsDNA into and through the RuvAB complex. HJ branch migration allows RuvC to scan DNA until it finds its consensus sequence, where it cleaves and resolves the cruciform DNA. The chain is Holliday junction branch migration complex subunit RuvA from Shigella boydii serotype 18 (strain CDC 3083-94 / BS512).